The chain runs to 2517 residues: Cullin-9 (2517 aa).

Residue K87 forms a Glycyl lysine isopeptide (Lys-Gly) (interchain with G-Cter in ubiquitin) linkage. Positions 276–288 (SPELGAGDQSSPC) are enriched in polar residues. The segment at 276–296 (SPELGAGDQSSPCATREKSRG) is disordered. In terms of domain architecture, CPH spans 366–439 (RSEFSSRSGY…HWHMLEILGP (74 aa)). The span at 576-589 (SNEPSSSSTSRNHS) shows a compositional bias: low complexity. The tract at residues 576 to 639 (SNEPSSSSTS…TETPMAQSDS (64 aa)) is disordered. The span at 593–609 (DPEEESKSEASFSEEET) shows a compositional bias: acidic residues. A compositionally biased stretch (basic and acidic residues) spans 610 to 630 (ESLKAKAEAPKTEAEPTKTRT). S976 bears the Phosphoserine mark. The DOC domain maps to 1143–1322 (PINIPFFDVF…RTCLFYTIRA (180 aa)). Residue 1363–1370 (AAQALGKT) coordinates ATP. 2 disordered regions span residues 1432–1466 (VEPP…VLPS) and 1664–1685 (DEEE…AEKE). A compositionally biased stretch (pro residues) spans 1433 to 1443 (EPPPGPSPEPS). S1457 is modified (phosphoserine). Residues 1649–1691 (LFQLQRLDKLFLEQEDEEEKRLEEEEEEEEEEEAEKELFIEDP) adopt a coiled-coil conformation. Residues 1664-1683 (DEEEKRLEEEEEEEEEEEAE) are compositionally biased toward acidic residues. K1881 is covalently cross-linked (Glycyl lysine isopeptide (Lys-Gly) (interchain with G-Cter in NEDD8)). The TRIAD supradomain stretch occupies residues 2066–2283 (RPDHCPVCVS…KDYYNCSAMV (218 aa)). C2070, C2073, C2088, H2090, C2093, C2096, C2115, C2120, C2160, C2166, C2181, C2184, C2189, C2192, H2198, C2203, C2236, and C2239 together coordinate Zn(2+). The RING-type 1 zinc-finger motif lies at 2070 to 2120 (CPVCVSPLGCDDDLPSLCCMHYCCKSCWNEYLTTRIEQNLVLNCTCPIADC). The IBR-type zinc-finger motif lies at 2140–2203 (SKYEKALLRG…FPEAHYPASC (64 aa)). The segment at 2236–2265 (CPSCQAPIEKNEGCLHMTCAKCNHGFCWRC) adopts an RING-type 2; atypical zinc-finger fold. C2249 is an active-site residue. C2254, C2257, C2262, C2265, H2273, and C2279 together coordinate Zn(2+). Residues 2365 to 2385 (VEQQTENLELHTNALQILLEE) adopt a coiled-coil conformation. At S2436 the chain carries Phosphoserine. Residues 2442-2517 (WEAKGPNMPG…EEEDEDEAYD (76 aa)) are disordered. Acidic residues-rich tracts occupy residues 2461–2499 (EAEE…ENLD) and 2506–2517 (GDEEEDEDEAYD).

It belongs to the cullin family. As to quaternary structure, component of the Cul9-RING complex consisting of CUL9 and RBX1; the CUL9-RBX1 complex is a heterododecamer composed of six CUL9 and six RBX1 protomers. Interacts (via C-terminal TRIAD/RBR supradomain) with E2 ubiquitin-conjugating enzyme UBE2L3. Interacts with CUL7; the interaction with the CUL7 component of the 3M complex leads to inhibition of CUL9 activity. The CUL7-CUL9 heterodimer seems to interact specifically with TP53, likely via the CPH domain. Forms a complex with p53/TP53 in the cytoplasm of unstressed cells. Interacts with UBCH7 and UBCH8. In terms of processing, autoubiquitinated by the CUL9-RBX1 complex at Lys-87. Neddylated. Neddylation is mediated by E1 enzyme UBA3-NAE1 complex and E2 enzyme UBE2F. Structural rearrangment of the C-terminal TRIAD/RBR supradomain may play a role in neddylation and deneddylation. As to expression, ubiquitously expressed in all tissues with highest expression in testis brain and kidney.

The protein resides in the cytoplasm. Functionally, core component of a Cul9-RING ubiquitin-protein ligase complex composed of CUL9 and RBX1. The CUL9-RBX1 complex mediates ubiquitination and subsequent degradation of BIRC5 and is required to maintain microtubule dynamics and genome integrity. Acts downstream of the 3M complex, which inhibits the ubiquitination of BIRC5. The CUL9-RBX1 complex also mediates mono-ubiquitination of p53/TP53. Acts as a cytoplasmic anchor protein in p53/TP53-associated protein complex. Regulates the subcellular localization of p53/TP53 and its subsequent function. Ubiquitinates apurinic/apyrimidinic endodeoxyribonuclease APEX2. Ubiquitination by the CUL9-RBX1 complex is predominantly mediated by E2 ubiquitin-conjugating enzymes UBE2L3 and UBE2D2. In Homo sapiens (Human), this protein is Cullin-9 (CUL9).